The primary structure comprises 329 residues: GTP 3',8-cyclase (329 aa).

One can recognise a Radical SAM core domain in the interval 8-234 (AFARKFYYLR…QLRQRSDGPA (227 aa)). Arg17 contributes to the GTP binding site. 2 residues coordinate [4Fe-4S] cluster: Cys24 and Cys28. Tyr30 is an S-adenosyl-L-methionine binding site. Cys31 serves as a coordination point for [4Fe-4S] cluster. Arg68 contacts GTP. Gly72 serves as a coordination point for S-adenosyl-L-methionine. Thr99 contacts GTP. Ser123 is an S-adenosyl-L-methionine binding site. Lys160 serves as a coordination point for GTP. Met194 lines the S-adenosyl-L-methionine pocket. [4Fe-4S] cluster-binding residues include Cys257 and Cys260. Residue 262–264 (RLR) coordinates GTP. Residue Cys274 participates in [4Fe-4S] cluster binding.

This sequence belongs to the radical SAM superfamily. MoaA family. Monomer and homodimer. Requires [4Fe-4S] cluster as cofactor.

The catalysed reaction is GTP + AH2 + S-adenosyl-L-methionine = (8S)-3',8-cyclo-7,8-dihydroguanosine 5'-triphosphate + 5'-deoxyadenosine + L-methionine + A + H(+). It participates in cofactor biosynthesis; molybdopterin biosynthesis. In terms of biological role, catalyzes the cyclization of GTP to (8S)-3',8-cyclo-7,8-dihydroguanosine 5'-triphosphate. The sequence is that of GTP 3',8-cyclase from Escherichia coli (strain K12 / MC4100 / BW2952).